The primary structure comprises 380 residues: Tetraacyldisaccharide 4'-kinase (380 aa).

51–58 (SVGGTGKT) provides a ligand contact to ATP.

This sequence belongs to the LpxK family.

The enzyme catalyses a lipid A disaccharide + ATP = a lipid IVA + ADP + H(+). The protein operates within glycolipid biosynthesis; lipid IV(A) biosynthesis; lipid IV(A) from (3R)-3-hydroxytetradecanoyl-[acyl-carrier-protein] and UDP-N-acetyl-alpha-D-glucosamine: step 6/6. Its function is as follows. Transfers the gamma-phosphate of ATP to the 4'-position of a tetraacyldisaccharide 1-phosphate intermediate (termed DS-1-P) to form tetraacyldisaccharide 1,4'-bis-phosphate (lipid IVA). The chain is Tetraacyldisaccharide 4'-kinase from Bacteroides thetaiotaomicron (strain ATCC 29148 / DSM 2079 / JCM 5827 / CCUG 10774 / NCTC 10582 / VPI-5482 / E50).